The sequence spans 446 residues: Na(+)-translocating NADH-quinone reductase subunit A (446 aa).

Belongs to the NqrA family. Composed of six subunits; NqrA, NqrB, NqrC, NqrD, NqrE and NqrF.

The catalysed reaction is a ubiquinone + n Na(+)(in) + NADH + H(+) = a ubiquinol + n Na(+)(out) + NAD(+). In terms of biological role, NQR complex catalyzes the reduction of ubiquinone-1 to ubiquinol by two successive reactions, coupled with the transport of Na(+) ions from the cytoplasm to the periplasm. NqrA to NqrE are probably involved in the second step, the conversion of ubisemiquinone to ubiquinol. The polypeptide is Na(+)-translocating NADH-quinone reductase subunit A (Vibrio atlanticus (strain LGP32) (Vibrio splendidus (strain Mel32))).